The primary structure comprises 121 residues: Large ribosomal subunit protein bL12 (121 aa).

It belongs to the bacterial ribosomal protein bL12 family. Homodimer. Part of the ribosomal stalk of the 50S ribosomal subunit. Forms a multimeric L10(L12)X complex, where L10 forms an elongated spine to which 2 to 4 L12 dimers bind in a sequential fashion. Binds GTP-bound translation factors.

Functionally, forms part of the ribosomal stalk which helps the ribosome interact with GTP-bound translation factors. Is thus essential for accurate translation. The polypeptide is Large ribosomal subunit protein bL12 (Serratia proteamaculans (strain 568)).